We begin with the raw amino-acid sequence, 215 residues long: uncharacterized protein (215 aa).

Active-site charge relay system residues include serine 114, aspartate 162, and histidine 194.

It belongs to the AB hydrolase superfamily. AB hydrolase 2 family.

This is an uncharacterized protein from Rickettsia typhi (strain ATCC VR-144 / Wilmington).